The chain runs to 156 residues: Large ribosomal subunit protein bL9 (156 aa).

Belongs to the bacterial ribosomal protein bL9 family.

Its function is as follows. Binds to the 23S rRNA. The protein is Large ribosomal subunit protein bL9 of Treponema pallidum (strain Nichols).